A 152-amino-acid chain; its full sequence is 2-C-methyl-D-erythritol 2,4-cyclodiphosphate synthase (152 aa).

2 residues coordinate a divalent metal cation: aspartate 8 and histidine 10. 4-CDP-2-C-methyl-D-erythritol 2-phosphate-binding positions include 8–10 (DSH) and 34–35 (HS). Histidine 42 serves as a coordination point for a divalent metal cation. Residues 56–58 (DIG), 61–65 (FPDTD), 100–106 (LDRPKLG), and 131–135 (FKTSE) each bind 4-CDP-2-C-methyl-D-erythritol 2-phosphate.

The protein belongs to the IspF family. In terms of assembly, homotrimer. Requires a divalent metal cation as cofactor.

The catalysed reaction is 4-CDP-2-C-methyl-D-erythritol 2-phosphate = 2-C-methyl-D-erythritol 2,4-cyclic diphosphate + CMP. It participates in isoprenoid biosynthesis; isopentenyl diphosphate biosynthesis via DXP pathway; isopentenyl diphosphate from 1-deoxy-D-xylulose 5-phosphate: step 4/6. In terms of biological role, involved in the biosynthesis of isopentenyl diphosphate (IPP) and dimethylallyl diphosphate (DMAPP), two major building blocks of isoprenoid compounds. Catalyzes the conversion of 4-diphosphocytidyl-2-C-methyl-D-erythritol 2-phosphate (CDP-ME2P) to 2-C-methyl-D-erythritol 2,4-cyclodiphosphate (ME-CPP) with a corresponding release of cytidine 5-monophosphate (CMP). This Thermus thermophilus (strain ATCC 27634 / DSM 579 / HB8) protein is 2-C-methyl-D-erythritol 2,4-cyclodiphosphate synthase.